We begin with the raw amino-acid sequence, 97 residues long: uncharacterized protein (97 aa).

The disordered stretch occupies residues 27–50 (IGESEDKTNSRGQPATMKEDEVED).

This is an uncharacterized protein from Caldicellulosiruptor saccharolyticus (Caldocellum saccharolyticum).